A 2603-amino-acid polypeptide reads, in one-letter code: Protein SABRE (2603 aa).

Residues 1-35 (MAASPAKFFFGFLIVSIVLWMIFMLFAWMLSRVLG) form the signal peptide. An N-linked (GlcNAc...) asparagine glycan is attached at asparagine 196. A disordered region spans residues 259–287 (FPKSKQSSASLRSDEVRTSATAASSAKKP). Asparagine 331, asparagine 486, asparagine 597, asparagine 807, asparagine 867, asparagine 887, asparagine 1154, asparagine 1249, asparagine 1280, and asparagine 1408 each carry an N-linked (GlcNAc...) asparagine glycan. The tract at residues 786-814 (PESGCNKGISSVKDGGPSEKINQSNSVNK) is disordered. Residues 1416–1436 (FHQSPSSTEHPTDVGTVYSSQ) are disordered. Residues asparagine 1492 and asparagine 1659 are each glycosylated (N-linked (GlcNAc...) asparagine). Disordered regions lie at residues 1656–1676 (EFEN…DDDG) and 1717–1777 (EPPK…DDIG). The segment covering 1731 to 1748 (KIHEENQKESCPETHQGE) has biased composition (basic and acidic residues). The span at 1749–1766 (MSRSSASPGRNLPSSPSH) shows a compositional bias: polar residues. A coiled-coil region spans residues 1995–2023 (VEEVELAKINLEEKERERKLLLDDIRKLS). Asparagine 2333 carries N-linked (GlcNAc...) asparagine glycosylation. Disordered stretches follow at residues 2339 to 2380 (EQQE…RPRK), 2448 to 2479 (GKKF…KPDQ), and 2554 to 2603 (IRRH…DFRE). Residues 2343–2380 (DFSKQKVKEIKPVKSGRSSHEEKKAGKSHEEKKSRPRK) are compositionally biased toward basic and acidic residues. The N-linked (GlcNAc...) asparagine glycan is linked to asparagine 2467. Residues 2554–2565 (IRRHTKKFRPRS) are compositionally biased toward basic residues. Residues 2566–2583 (QRGSTSQQRESLPSSPIE) show a composition bias toward polar residues. Over residues 2586 to 2603 (PFESGYSSGSSPYEDFRE) the composition is skewed to low complexity.

This sequence belongs to the SABRE family. As to expression, highest levels in leaves, also expressed in leaves, flowers, and siliques, and, to a lower extent, in roots and stems.

It is found in the secreted. The protein resides in the golgi apparatus. May be involved in membrane trafficking. Required for cell expansion, especially in root cortex, probably by counteracting the action of ethylene in promoting cells radial expansion. Involved in female organ development. Antagonistically interacts with ethylene signaling to regulate plant responses to Pi starvation. The protein is Protein SABRE of Arabidopsis thaliana (Mouse-ear cress).